A 114-amino-acid chain; its full sequence is RutC family protein YoaB (114 aa).

This sequence belongs to the RutC family.

The chain is RutC family protein YoaB (yoaB) from Escherichia coli O6:H1 (strain CFT073 / ATCC 700928 / UPEC).